The sequence spans 1252 residues: Myosin-3 (1252 aa).

Residues 36 to 715 (VGVSDLTLLS…TLFALENMRD (680 aa)) enclose the Myosin motor domain. 129–136 (GESGAGKT) is a binding site for ATP. At S357 the chain carries Phosphoserine. The actin-binding stretch occupies residues 404–486 (SIGILDIYGF…PGIFAAMNDA (83 aa)). IQ domains are found at residues 719-739 (YNMA…RIDA) and 740-767 (AIRI…AGDK). In terms of domain architecture, TH1 spans 773–963 (KERRNMSLLG…TILVRHGNPP (191 aa)). Disordered regions lie at residues 988–1086 (KTMK…KTSV), 1106–1136 (YSLP…PSEL), and 1203–1252 (INEP…DDDW). Residues 997 to 1016 (KRTPQALPTSSLAASAAQAA) are compositionally biased toward low complexity. 3 stretches are compositionally biased toward polar residues: residues 1050 to 1063 (PVRN…NSKV), 1106 to 1121 (YSLP…TDSY), and 1203 to 1219 (INEP…NTDL). One can recognise an SH3 domain in the interval 1116–1178 (SQTDSYQAAY…PTSYIVKYNG (63 aa)). The segment covering 1238–1252 (SEEDISREEDDDDDW) has biased composition (acidic residues).

It belongs to the TRAFAC class myosin-kinesin ATPase superfamily. Myosin family. Phosphorylation of the TEDS site (Ser-357) is required for the polarization of the actin cytoskeleton. Phosphorylation probably activates the myosin-I ATPase activity.

The protein resides in the cytoplasm. It is found in the cytoskeleton. Its subcellular location is the actin patch. Its function is as follows. Type-I myosin implicated in the organization of the actin cytoskeleton. Required for proper actin cytoskeleton polarization. At the cell cortex, assembles in patch-like structures together with proteins from the actin-polymerizing machinery and promotes actin assembly. Functions as actin nucleation-promoting factor (NPF) for the Arp2/3 complex. In Candida glabrata (strain ATCC 2001 / BCRC 20586 / JCM 3761 / NBRC 0622 / NRRL Y-65 / CBS 138) (Yeast), this protein is Myosin-3 (MYO3).